A 300-amino-acid chain; its full sequence is MRLLISCILILSILVNFISGHAVLVAPTPFSTNPSKTKLCGGGTKQTVAQITWCPNSSKTNRATWKIVVGDGAGAVTFKLATNGGTTEGDFTTTLTSKVLSGSDPKEVGTYYMDVRVPTGTTCTGTNGICTLQAYTESSGWYSCSAIKLDSSACDKAAEETALVEYNVQVKDNVKFCDQVVNKVVLLPAGTQLGEYDQRTQGVFKNNMANPLVIGQNSSQCGNLYEKVLCDVSFPLAPGSDGKPIYQVTQKQCEDFIEVCDVVSHVELYPCSIYGDGNGSNLIIIPTLLIISILSLILMF.

Positions Met1 to Gly20 are cleaved as a signal peptide. The Extracellular portion of the chain corresponds to His21–Gly279. Asn56, Asn217, and Asn278 each carry an N-linked (GlcNAc...) asparagine glycan. The chain crosses the membrane as a helical span at residues Ser280–Phe300.

Its subcellular location is the membrane. This is an uncharacterized protein from Dictyostelium discoideum (Social amoeba).